The chain runs to 478 residues: Cytochrome P450 monooxygenase ATR3 (478 aa).

Residues 20–42 form a helical membrane-spanning segment; it reads AVAFVTASALYYVLPAAISHIQL. Asparagine 159 and asparagine 268 each carry an N-linked (GlcNAc...) asparagine glycan.

It belongs to the cytochrome P450 family. Requires heme as cofactor.

Its subcellular location is the membrane. It functions in the pathway mycotoxin biosynthesis. In terms of biological role, cytochrome P450 monooxygenase; part of the core atranone cluster (CAC) which products are predicted to catalyze most or all steps of mycotoxin atranone synthesis, starting from geranylgeranyl pyrophosphate (GGPP). The initial cyclization of GGPP to dolabellane is probably performed by the terpene cyclase ATR13. The Baeyer-Villiger oxidation near the end of the atranone synthesis, which converts atranones D and E to atranones F and G is predicted to be catalyzed by the monooxygenase ATR8. Of the CAC's other predicted gene products, the reducing PKS ATR6 might synthesize a polyketide chain. This polyketide is probably transferred onto the atranone backbone by the polyketide transferase ATR5. Other predicted CAC products include 4 oxygenases (ATR2, ATR3, ATR4, and ATR14), 3 short-chain reductases (ATR7, ATR9, and ATR10), and a methyltransferase (ATR12). These may all be involved in the various steps of atranone biosynthesis, although their specific roles must await experimental determination. The sequence is that of Cytochrome P450 monooxygenase ATR3 from Stachybotrys chlorohalonatus (strain IBT 40285).